Consider the following 163-residue polypeptide: Large ribosomal subunit protein uL11 (163 aa).

This sequence belongs to the universal ribosomal protein uL11 family. As to quaternary structure, part of the ribosomal stalk of the 50S ribosomal subunit. Interacts with L10 and the large rRNA to form the base of the stalk. L10 forms an elongated spine to which L12 dimers bind in a sequential fashion forming a multimeric L10(L12)X complex.

Functionally, forms part of the ribosomal stalk which helps the ribosome interact with GTP-bound translation factors. In Thermococcus onnurineus (strain NA1), this protein is Large ribosomal subunit protein uL11.